Here is a 333-residue protein sequence, read N- to C-terminus: MKKSTKLLAGIVTLASAMTLAACQSTNDNTSVITMKGDTISVSDFYNETKNTEISQRAMLNLVVSRVFEDQYGKKVSKKKTEEAYNKSAEQYGASFSAALAQSGLTTDTYKRQIRSAMLVEYAVKEAAKKELTDADYKKAYESYTPEMTTQVITLDNEETAKAILGEVKAEGADFAAIAKEKTTAADKKVDYKFDSGDTKLPADVIKAASGLKEGDISEVVSVLDPATYQNKFYIVKVTKKAEKASDWKKYKKRLKEIVLAEKTQNIDFQNKVIAKALDKANVKIKDQAFANILAQYANTDKKASKANTSKSDQKTSSDSSKDSQSSKSKSEK.

Residues 1 to 22 (MKKSTKLLAGIVTLASAMTLAA) form the signal peptide. The N-palmitoyl cysteine moiety is linked to residue Cys-23. A lipid anchor (S-diacylglycerol cysteine) is attached at Cys-23. Residues 145-240 (TPEMTTQVIT…NKFYIVKVTK (96 aa)) enclose the PpiC domain. The tract at residues 301-333 (DKKASKANTSKSDQKTSSDSSKDSQSSKSKSEK) is disordered. Residues 312 to 322 (SDQKTSSDSSK) show a composition bias toward basic and acidic residues. A compositionally biased stretch (low complexity) spans 323–333 (DSQSSKSKSEK).

This sequence belongs to the PrsA family.

The protein localises to the cell membrane. The catalysed reaction is [protein]-peptidylproline (omega=180) = [protein]-peptidylproline (omega=0). Functionally, plays a major role in protein secretion by helping the post-translocational extracellular folding of several secreted proteins. In Streptococcus equi subsp. zooepidemicus (strain MGCS10565), this protein is Foldase protein PrsA.